We begin with the raw amino-acid sequence, 296 residues long: 4-hydroxy-tetrahydrodipicolinate synthase (296 aa).

Pyruvate is bound at residue threonine 49. The active-site Proton donor/acceptor is tyrosine 137. The active-site Schiff-base intermediate with substrate is the lysine 166. Isoleucine 208 serves as a coordination point for pyruvate.

Belongs to the DapA family. In terms of assembly, homotetramer; dimer of dimers.

It is found in the cytoplasm. The catalysed reaction is L-aspartate 4-semialdehyde + pyruvate = (2S,4S)-4-hydroxy-2,3,4,5-tetrahydrodipicolinate + H2O + H(+). It functions in the pathway amino-acid biosynthesis; L-lysine biosynthesis via DAP pathway; (S)-tetrahydrodipicolinate from L-aspartate: step 3/4. Functionally, catalyzes the condensation of (S)-aspartate-beta-semialdehyde [(S)-ASA] and pyruvate to 4-hydroxy-tetrahydrodipicolinate (HTPA). In Chlorobium chlorochromatii (strain CaD3), this protein is 4-hydroxy-tetrahydrodipicolinate synthase.